The chain runs to 296 residues: Phosphoribosylaminoimidazole-succinocarboxamide synthase (296 aa).

This sequence belongs to the SAICAR synthetase family.

It carries out the reaction 5-amino-1-(5-phospho-D-ribosyl)imidazole-4-carboxylate + L-aspartate + ATP = (2S)-2-[5-amino-1-(5-phospho-beta-D-ribosyl)imidazole-4-carboxamido]succinate + ADP + phosphate + 2 H(+). The protein operates within purine metabolism; IMP biosynthesis via de novo pathway; 5-amino-1-(5-phospho-D-ribosyl)imidazole-4-carboxamide from 5-amino-1-(5-phospho-D-ribosyl)imidazole-4-carboxylate: step 1/2. The protein is Phosphoribosylaminoimidazole-succinocarboxamide synthase of Syntrophotalea carbinolica (strain DSM 2380 / NBRC 103641 / GraBd1) (Pelobacter carbinolicus).